Consider the following 344-residue polypeptide: 17-beta-hydroxysteroid dehydrogenase type 1 (344 aa).

Residue proline 3–lysine 32 coordinates NAD(+). NADP(+) contacts are provided by residues glycine 10–arginine 38 and aspartate 66. A Phosphoserine modification is found at serine 135. Position 143 (serine 143) interacts with substrate. Tyrosine 156 serves as the catalytic Proton acceptor. Lysine 160 is a binding site for NADP(+).

This sequence belongs to the short-chain dehydrogenases/reductases (SDR) family. Homodimer. Exists predominantly as a homodimer but also exits as monomer.

The protein resides in the cytoplasm. It carries out the reaction 17beta-estradiol + NAD(+) = estrone + NADH + H(+). The enzyme catalyses 17beta-estradiol + NADP(+) = estrone + NADPH + H(+). It catalyses the reaction testosterone + NADP(+) = androst-4-ene-3,17-dione + NADPH + H(+). Its pathway is steroid biosynthesis; estrogen biosynthesis. In terms of biological role, favors the reduction of estrogens and androgens. Converts estrone (E1) to a more potent estrogen, 17beta-estradiol (E2). Also has 20-alpha-HSD activity. Uses preferentially NADH. This is 17-beta-hydroxysteroid dehydrogenase type 1 from Mus musculus (Mouse).